A 996-amino-acid polypeptide reads, in one-letter code: Phototropin-1 (996 aa).

The interval 1-184 (MEPTEKPSTK…PGGRSGIPRV (184 aa)) is disordered. 2 positions are modified to phosphoserine: S23 and S58. A compositionally biased stretch (polar residues) spans 49 to 59 (QNLSDPRGTSP). Pro residues predominate over residues 60–70 (QPRPQQEPAPS). Over residues 141 to 153 (SGGTENDPNGKKT) the composition is skewed to polar residues. Over residues 155 to 166 (SQRNSQNSCRSS) the composition is skewed to low complexity. The PAS 1 domain occupies 184-257 (VSEDLKDALS…AKIRETLAAG (74 aa)). S185 bears the Phosphoserine mark. N233 provides a ligand contact to FMN. At C234 the chain carries S-4a-FMN cysteine. Residues R235, Q238, R251, N266, N276, Q297, and K302 each contribute to the FMN site. The region spanning 258–312 (NNYCGRILNYKKDGTSFWNLLTIAPIKDESGKVLKFIGMQVEVSKHTEGAKEKAL) is the PAC 1 domain. S350, S376, and S410 each carry phosphoserine. 2 disordered regions span residues 351–413 (ESTN…SLSF) and 434–453 (YGEE…SVDD). The span at 434-443 (YGEEDDEISD) shows a compositional bias: acidic residues. A compositionally biased stretch (basic and acidic residues) spans 444 to 453 (RDERPESVDD). The residue at position 450 (S450) is a Phosphoserine. Residues 462–535 (KGIDLATTLE…KKIRNAIDNQ (74 aa)) enclose the PAS 2 domain. N511 contributes to the FMN binding site. C512 carries the post-translational modification S-4a-FMN cysteine. R513, Q516, R529, N544, N554, F556, and Q575 together coordinate FMN. A PAC 2 domain is found at 536–590 (TEVTVQLINYTKSGKKFWNIFHLQPMRDQKGEVQYFIGVQLDGSKHVEPVRNVIE). The Protein kinase domain maps to 663 to 952 (FKPVKPLGSG…ANEVKQHSFF (290 aa)). ATP is bound by residues 669-677 (LGSGDTGSV) and K692. Residue D788 is the Proton acceptor of the active site. Residues 806-862 (DFDLSCLTSCKPQLLIPSIDEKKKKKQQKSQQTPIFMAEPMRASNSFVGTEEYIAPE) form an activation loop region.

Belongs to the protein kinase superfamily. AGC Ser/Thr protein kinase family. As to quaternary structure, homodimer; disulfide-linked. Interacts with PKS1, PKS2, RPT2, RPT3, PHOT2 and BLUS1. Subunit of a complex made of CAR6, PHOT1 and RPT3/NPH3. Associates with CBC1 and CBC2. Binds to BHP. The cofactor is FMN. In terms of processing, autophosphorylated at Ser-185, Ser-350 and Ser-410 in response to blue light irradiation. Post-translationally, 2 molecules of FMN bind covalently to cysteines after exposure to blue light and are reversed in the dark. Present in guard cells (at protein level).

The protein resides in the cell membrane. The protein localises to the cytoplasm. The enzyme catalyses L-seryl-[protein] + ATP = O-phospho-L-seryl-[protein] + ADP + H(+). It catalyses the reaction L-threonyl-[protein] + ATP = O-phospho-L-threonyl-[protein] + ADP + H(+). Its activity is regulated as follows. Autophosphorylation is inhibited by staurosporine, but not by tyrphostin 9, sphingosine, GW5074 and BML-265. Its function is as follows. Protein kinase that acts as a blue light (BL) photoreceptor in a signal-transduction pathway for photo-induced movements. Triggers the phosphorylation of AHA1 and AHA2 C-terminal penultimate Thr in guard cells to activate them and induce stomatal opening in response to blue light (BL). Also phosphorylates BLUS1, a kinase involved in stomatal opening. Mediates the phosphorylation of CBC1 in stomata, but not of CBC2, in response to blue light. Required for blue light mediated mRNA destabilization. Mediates calcium spiking of extracellular origin in response to a low rate of blue light. Also mediates rapid membrane depolarization and growth inhibition in response to blue light. Necessary for root phototropism. Involved in hypocotyl phototropism under a low rate but not under a high rate of blue light. Contributes to the chloroplast accumulation but seems not to be required for chloroplast translocation. Regulates stomata opening and photomorphogenesis response of leaf tissue. Confers sensitivity to drought. Not involved in hypocotyl elongation inhibition, anthocyanin accumulation or cotyledon opening. Involved in the regulation of leaf position and morphology via the phosphorylation of ABCB19 during blue light responses to modulate auxin distribution. This Arabidopsis thaliana (Mouse-ear cress) protein is Phototropin-1.